Reading from the N-terminus, the 1214-residue chain is Peregrin (1214 aa).

The C2H2-type zinc-finger motif lies at 21-47; the sequence is YECPVETCRKVYKSYSGIEYHLYHYDH. 2 disordered regions span residues 43-87 and 118-177; these read YHYD…SPGR and VVSE…PKLP. The segment covering 58–67 has biased composition (basic residues); that stretch reads LRKHKKKGRQ. Residues 59–222 form an interaction with KAT6A and KAT6B region; that stretch reads RKHKKKGRQS…VEYDMDEEDY (164 aa). The segment covering 74 to 85 has biased composition (low complexity); it reads QSPSPSEVSQSP. A compositionally biased stretch (acidic residues) spans 119–130; sequence VSEDEEAPEEAP. Position 120 is a phosphoserine (S120). K147 is subject to N6-acetyllysine. Residues 148-167 show a composition bias toward basic residues; that stretch reads SGKHKNKEKRKDSNHHHHHN. The residue at position 238 (S238) is a Phosphoserine. The segment at 273–323 adopts a PHD-type 1 zinc-finger fold; that stretch reads DAVCCICNDGECQNSNVILFCDMCNLAVHQECYGVPYIPEGQWLCRRCLQS. The C2HC pre-PHD-type zinc finger occupies 327–360; it reads AVDCALCPNKGGAFKQTDDGRWAHVVCALWIPEV. The segment at 384–448 adopts a PHD-type 2 zinc-finger fold; that stretch reads LTCYICKQRG…RKTAYCDIHT (65 aa). The tract at residues 448-489 is disordered; that stretch reads TPPGSARRLPALSHSEGEEDEDEEEDEGKGWSSEKVKKAKAK. S460 and S462 each carry phosphoserine. Positions 464–474 are enriched in acidic residues; the sequence is GEEDEDEEEDE. The interval 501 to 821 is interaction with MEAF6 and ING5; sequence LAEKRAAAPV…IKKEMTALRR (321 aa). The segment at 543 to 1079 is required for RUNX1 and RUNX2 transcriptional activation; the sequence is YWTLKRQSRN…RGAGWLSEDE (537 aa). Residue K580 is modified to N6-acetyllysine. The Bromo domain occupies 628-732; sequence MQLTPFLILL…EQGGAVLRQA (105 aa). The interval 819–1062 is disordered; that stretch reads LRRKLAHQRE…VGTGRGVGHS (244 aa). Basic and acidic residues predominate over residues 825 to 838; the sequence is HQRETGRDGPERHG. Position 858 is a phosphothreonine (T858). Positions 858-871 are enriched in low complexity; sequence TDSAAEESSSQETS. S860, S917, S922, and S926 each carry phosphoserine. Residues 993–1021 are compositionally biased toward low complexity; the sequence is SLPRSSSDSESSSSSSSSAASDRTSTTPS. Position 1076 is a phosphoserine (S1076). Positions 1085–1168 constitute a PWWP domain; it reads ALDLVWAKCR…RTKLVPLGVN (84 aa). At S1187 the chain carries Phosphoserine.

As to quaternary structure, component of some HBO1 complex composed of KAT7/HBO1, MEAF6, ING5, and BRPF1. Component of the MOZ/MORF complex composed at least of ING5, KAT6A, KAT6B, MEAF6 and one of BRPF1, BRD1/BRPF2 and BRPF3. Interacts (via PHD-type zinc finger domains) with unmethylated histone H3 at 'Lys-4' (H3K4me0). Interacts with trimethylated 'Lys-36' of histone H3 (H3K36me3). Interacts with ING5; interaction directs BRPF1 to H4K4me3-enriched chromatin at the 5' of active genes. Interacts with KAT7. Acetylated by KAT6A. High levels in testis.

It is found in the nucleus. Its subcellular location is the chromosome. It localises to the cytoplasm. Functionally, scaffold subunit of various histone acetyltransferase (HAT) complexes, such as the MOZ/MORF and HBO1 complexes, which have a histone H3 acetyltransferase activity. Plays a key role in HBO1 complex by directing KAT7/HBO1 specificity towards histone H3 'Lys-14' acetylation (H3K14ac). Some HAT complexes preferentially mediate histone H3 'Lys-23' (H3K23ac) acetylation. Positively regulates the transcription of RUNX1 and RUNX2. The protein is Peregrin of Homo sapiens (Human).